Here is a 3174-residue protein sequence, read N- to C-terminus: Intermembrane lipid transfer protein VPS13A (3174 aa).

The Chorein N-terminal domain occupies 3-116 (FESVVVDVLN…LMEAKQQELK (114 aa)). TPR repeat units follow at residues 212–245 (LFAYWNVKSQMFYLSDYDNSLDDLKNGIVNENIV), 373–406 (LTSKKPPGELLVSLEELEKTLDVFNITIARQTAE), and 537–575 (IDSFHITGLPDNSEKPRLLSSLDDAMSLFQITFEINPLD). Serine 839 carries the phosphoserine modification. Residues 842–848 (EFFDAPC) carry the FFAT motif. 2 TPR repeats span residues 1256–1289 (VIDLITIKLSEMRLYRSRFINDAYQEVLDLLLPL) and 1291–1320 (LEVVVERNLCWEWYQEVPCFNVNAQLKPME). Serine 1416 is subject to Phosphoserine. The TPR 6 repeat unit spans residues 2009-2041 (YEGDTLLGTASPENEFNIPLGSYRSFIFLKPED). The 246-residue stretch at 2209-2454 (VAFHSPYWMV…VFYTWADPVG (246 aa)) folds into the SHR-BD domain. 3 TPR repeats span residues 2568 to 2601 (PMSVKHTEKLEREFKEYTESSPSEDKVIQLDTNV), 2717 to 2751 (LGFIYALTDLMTEAEVTENTEVELFHKDIEAFKEE), and 2860 to 2898 (ILGLDVLGNPFGLIREFSEGVEAFFYEPYQGAIQGPEEF). A required for mitochondrial localization region spans residues 2751 to 3174 (EYKTASLVDQ…QEAREPSPSL (424 aa)). Residues 2953-3027 (PAGFREGITR…SSTFQGIKRA (75 aa)) form a required for lipid droplet localization region. Residues 3086–3119 (MLMITRRGVLFVTKGTFGQLTCEWQYSFDEFTKE) form a TPR 10 repeat.

It belongs to the VPS13 family. Interacts (via FFAT motif) with VAPA and VAPB. Interacts with RAB7A. Interacts with XK. In terms of tissue distribution, expressed in red blood cells (at protein level). Widely expressed, with high expression in brain, heart, skeletal muscle and kidney.

It is found in the mitochondrion outer membrane. Its subcellular location is the endoplasmic reticulum membrane. The protein resides in the endosome membrane. It localises to the lysosome membrane. The protein localises to the lipid droplet. It is found in the golgi apparatus. Its subcellular location is the cytoplasmic vesicle. The protein resides in the secretory vesicle. It localises to the neuronal dense core vesicle. In terms of biological role, mediates the transfer of lipids between membranes at organelle contact sites. Binds phospholipids. Required for the formation or stabilization of ER-mitochondria contact sites which enable transfer of lipids between the ER and mitochondria. Negatively regulates lipid droplet size and motility. Required for efficient lysosomal protein degradation. The polypeptide is Intermembrane lipid transfer protein VPS13A (VPS13A) (Homo sapiens (Human)).